Here is a 230-residue protein sequence, read N- to C-terminus: Thymidylate kinase (230 aa).

23 to 30 (GIDGAGKT) provides a ligand contact to ATP.

This sequence belongs to the thymidylate kinase family.

It catalyses the reaction dTMP + ATP = dTDP + ADP. Functionally, phosphorylation of dTMP to form dTDP in both de novo and salvage pathways of dTTP synthesis. The polypeptide is Thymidylate kinase (Ureaplasma parvum serovar 3 (strain ATCC 27815 / 27 / NCTC 11736)).